A 1534-amino-acid polypeptide reads, in one-letter code: Dicer-like protein 1 (1534 aa).

The segment at Pro-36–Lys-70 is disordered. Acidic residues predominate over residues Glu-51–Ile-60. Positions Leu-130–Leu-311 constitute a Helicase ATP-binding domain. ATP is bound at residue Leu-143 to Thr-150. The short motif at Asp-256–His-259 is the DEAH box element. In terms of domain architecture, Helicase C-terminal spans Glu-456–Ile-613. The 91-residue stretch at Ala-648–Ala-738 folds into the Dicer dsRNA-binding fold domain. A PAZ domain is found at Lys-888–Ala-1016. 2 consecutive RNase III domains span residues Ser-1054–Gly-1199 and Ala-1250–Asp-1402. Glu-1291, Asp-1388, and Glu-1391 together coordinate Mg(2+). Positions Thr-1436–Gly-1504 constitute a DRBM domain. Zn(2+) is bound by residues Cys-1448, His-1475, Cys-1516, and Cys-1518.

Belongs to the helicase family. Dicer subfamily. It depends on Mg(2+) as a cofactor. The cofactor is Mn(2+).

In terms of biological role, dicer-like endonuclease involved in cleaving double-stranded RNA in the RNA interference (RNAi) pathway. Produces 21 to 25 bp dsRNAs (siRNAs) which target the selective destruction of homologous RNAs leading to sequence-specific suppression of gene expression, called post-transcriptional gene silencing (PTGS). Part of a broad host defense response against viral infection and transposons. This is Dicer-like protein 1 (dcl1) from Aspergillus clavatus (strain ATCC 1007 / CBS 513.65 / DSM 816 / NCTC 3887 / NRRL 1 / QM 1276 / 107).